The sequence spans 698 residues: Colicin V secretion/processing ATP-binding protein CvaB (698 aa).

In terms of domain architecture, Peptidase C39 spans 26-145 (QTETAECGLA…RYFTGVALEV (120 aa)). Cys32 is an active-site residue. A run of 7 helical transmembrane segments spans residues 33 to 53 (GLAC…LIYL), 92 to 112 (VLKT…LVSV), 176 to 196 (LAKI…MPVG), 211 to 231 (GLLT…AATS), 289 to 311 (TSVI…MLLY), 315 to 334 (LTWI…LVTY), and 412 to 432 (IVIL…IGMF). In terms of domain architecture, ABC transmembrane type-1 spans 176–458 (LAKIFCLSVV…LTSFLLQLRI (283 aa)). The 207-residue stretch at 492–698 (LETNGLSYRY…LRTVDRVISI (207 aa)) folds into the ABC transporter domain. 526–533 (GASGAGKT) is an ATP binding site.

Belongs to the ABC transporter superfamily. Colicin V exporter (TC 3.A.1.110.2) family.

The protein resides in the cell membrane. Functionally, involved, in conjunction with CvaA, in the secretion of colicin V. The protein is Colicin V secretion/processing ATP-binding protein CvaB (cvaB) of Escherichia coli.